The primary structure comprises 650 residues: Serine/threonine-protein phosphatase with EF-hands 1 (650 aa).

In terms of domain architecture, IQ spans 16–45 (VIKAALVIQNWYRRYRARLRVRQHYALAIF). A catalytic region spans residues 124 to 456 (IHILLQAFKQ…PQFFQYQVTS (333 aa)). Mn(2+)-binding residues include D175, H177, D204, and N236. The active-site Proton donor is the H237. Position 288 (H288) interacts with Mn(2+). The disordered stretch occupies residues 315–348 (PVLGNQETGEKRNKSASNYVEPRKVEPDKTPSED). Basic and acidic residues predominate over residues 335–348 (EPRKVEPDKTPSED). Position 404 (H404) interacts with Mn(2+). EF-hand domains are found at residues 484-519 (SRKTDLINAFELRDHSRSGRISLAEWAFSMENILGL), 567-602 (RYRSDLKIIFNIIDSDQSGLISMDEFRTMWKLFNAH), and 607-642 (IDDSQIDELASIVDFNKDGNIDFNEFLKAFYVVHKY). 14 residues coordinate Ca(2+): D497, S499, S501, R503, E508, D580, D582, S584, E591, D620, N622, D624, N626, and E631.

This sequence belongs to the PPP phosphatase family. Mn(2+) serves as cofactor. It depends on Mg(2+) as a cofactor. In the embryo it is almost exclusively expressed in the peripheral nervous system, within sensory neurons of cranial and dorsal root ganglia. Otherwise found in fetal inner ear and a small group of neurons in the midbrain/pons junction.

It catalyses the reaction O-phospho-L-seryl-[protein] + H2O = L-seryl-[protein] + phosphate. The enzyme catalyses O-phospho-L-threonyl-[protein] + H2O = L-threonyl-[protein] + phosphate. With respect to regulation, activated by calcium. Its function is as follows. May have a role in the recovery or adaptation response of photoreceptors. May have a role in diverse sensory neurons and in development. This Mus musculus (Mouse) protein is Serine/threonine-protein phosphatase with EF-hands 1 (Ppef1).